Consider the following 292-residue polypeptide: Probable endonuclease 4 (292 aa).

9 residues coordinate Zn(2+): histidine 69, histidine 109, glutamate 145, aspartate 179, histidine 182, histidine 216, aspartate 229, histidine 231, and glutamate 261.

The protein belongs to the AP endonuclease 2 family. It depends on Zn(2+) as a cofactor.

The catalysed reaction is Endonucleolytic cleavage to 5'-phosphooligonucleotide end-products.. Endonuclease IV plays a role in DNA repair. It cleaves phosphodiester bonds at apurinic or apyrimidinic (AP) sites, generating a 3'-hydroxyl group and a 5'-terminal sugar phosphate. The polypeptide is Probable endonuclease 4 (Desulfotalea psychrophila (strain LSv54 / DSM 12343)).